Here is a 350-residue protein sequence, read N- to C-terminus: 4-hydroxythreonine-4-phosphate dehydrogenase (350 aa).

Substrate contacts are provided by His138 and Thr139. His173, His218, and His273 together coordinate a divalent metal cation. Residues Lys281, Asn290, and Arg299 each coordinate substrate.

It belongs to the PdxA family. In terms of assembly, homodimer. Requires Zn(2+) as cofactor. The cofactor is Mg(2+). Co(2+) serves as cofactor.

It localises to the cytoplasm. The enzyme catalyses 4-(phosphooxy)-L-threonine + NAD(+) = 3-amino-2-oxopropyl phosphate + CO2 + NADH. Its pathway is cofactor biosynthesis; pyridoxine 5'-phosphate biosynthesis; pyridoxine 5'-phosphate from D-erythrose 4-phosphate: step 4/5. Catalyzes the NAD(P)-dependent oxidation of 4-(phosphooxy)-L-threonine (HTP) into 2-amino-3-oxo-4-(phosphooxy)butyric acid which spontaneously decarboxylates to form 3-amino-2-oxopropyl phosphate (AHAP). In Xanthobacter autotrophicus (strain ATCC BAA-1158 / Py2), this protein is 4-hydroxythreonine-4-phosphate dehydrogenase.